The following is a 520-amino-acid chain: Hydroxymethylglutaryl-CoA synthase, cytoplasmic (520 aa).

Ser-4 carries the post-translational modification Phosphoserine. Asp-43 and Ala-44 together coordinate (3S)-3-hydroxy-3-methylglutaryl-CoA. 44–46 (AGK) is a CoA binding site. Lys-46 bears the N6-acetyllysine mark. The active-site Proton donor/acceptor is the Glu-95. The (3S)-3-hydroxy-3-methylglutaryl-CoA site is built by Cys-129, Asn-167, Thr-171, Ser-221, and His-264. The active-site Acyl-thioester intermediate is Cys-129. Position 167 (Asn-167) interacts with CoA. Ser-221 serves as a coordination point for CoA. Catalysis depends on His-264, which acts as the Proton donor/acceptor. CoA is bound by residues Lys-269 and Lys-273. (3S)-3-hydroxy-3-methylglutaryl-CoA contacts are provided by Lys-273, Asn-343, and Ser-377. Lys-273 is subject to N6-acetyllysine. Thr-476 carries the phosphothreonine modification. The disordered stretch occupies residues 492-520 (HIPSPAKKVPRLPATAAEPEAAVISNGEH). Phosphoserine is present on residues Ser-495 and Ser-516.

This sequence belongs to the thiolase-like superfamily. HMG-CoA synthase family. In terms of assembly, homodimer.

The protein localises to the cytoplasm. It catalyses the reaction acetoacetyl-CoA + acetyl-CoA + H2O = (3S)-3-hydroxy-3-methylglutaryl-CoA + CoA + H(+). It participates in metabolic intermediate biosynthesis; (R)-mevalonate biosynthesis; (R)-mevalonate from acetyl-CoA: step 2/3. Functionally, catalyzes the condensation of acetyl-CoA with acetoacetyl-CoA to form HMG-CoA, which is converted by HMG-CoA reductase (HMGCR) into mevalonate, a precursor for cholesterol synthesis. This chain is Hydroxymethylglutaryl-CoA synthase, cytoplasmic, found in Homo sapiens (Human).